A 196-amino-acid polypeptide reads, in one-letter code: Probable GTP-binding protein EngB (196 aa).

The EngB-type G domain maps to 24-196 (ELSEVALSGR…IWNLIEPYIS (173 aa)). Residues 32-39 (GRSNVGKS), 59-63 (GKTQT), 77-80 (DVPG), 144-147 (TKED), and 176-178 (YSS) each bind GTP. Mg(2+) is bound by residues Ser-39 and Thr-61.

It belongs to the TRAFAC class TrmE-Era-EngA-EngB-Septin-like GTPase superfamily. EngB GTPase family. It depends on Mg(2+) as a cofactor.

Necessary for normal cell division and for the maintenance of normal septation. The sequence is that of Probable GTP-binding protein EngB from Staphylococcus aureus (strain MRSA252).